Here is a 299-residue protein sequence, read N- to C-terminus: Tyrosine recombinase XerC (299 aa).

A Core-binding (CB) domain is found at 1–85; it reads MEQHLDAYCM…AVRGFYKYLN (85 aa). The 180-residue stretch at 106–285 folds into the Tyr recombinase domain; that stretch reads RLPKTLDTDR…DFQHLATVYD (180 aa). Residues R146, K170, H237, R240, and H263 contribute to the active site. The active-site O-(3'-phospho-DNA)-tyrosine intermediate is Y272.

This sequence belongs to the 'phage' integrase family. XerC subfamily. As to quaternary structure, forms a cyclic heterotetrameric complex composed of two molecules of XerC and two molecules of XerD.

It localises to the cytoplasm. Site-specific tyrosine recombinase, which acts by catalyzing the cutting and rejoining of the recombining DNA molecules. The XerC-XerD complex is essential to convert dimers of the bacterial chromosome into monomers to permit their segregation at cell division. It also contributes to the segregational stability of plasmids. This Pseudomonas savastanoi pv. phaseolicola (strain 1448A / Race 6) (Pseudomonas syringae pv. phaseolicola (strain 1448A / Race 6)) protein is Tyrosine recombinase XerC.